Consider the following 119-residue polypeptide: Large ribosomal subunit protein bL20 (119 aa).

The protein belongs to the bacterial ribosomal protein bL20 family.

Its function is as follows. Binds directly to 23S ribosomal RNA and is necessary for the in vitro assembly process of the 50S ribosomal subunit. It is not involved in the protein synthesizing functions of that subunit. The protein is Large ribosomal subunit protein bL20 of Buchnera aphidicola subsp. Cinara cedri (strain Cc).